A 652-amino-acid chain; its full sequence is Nitrate reductase-like protein NarX (652 aa).

Positions 1-251 are nitrate reductase alpha subunit; sequence MTVTPRTGSR…FGDQTDVPES (251 aa). In terms of domain architecture, 4Fe-4S Mo/W bis-MGD-type spans 53 to 117; sequence DKVVRSTHGV…AFSWYTYSPT (65 aa). His-60, Cys-64, Cys-68, and Cys-103 together coordinate [4Fe-4S] cluster. Residue Asp-233 coordinates Mo-bis(molybdopterin guanine dinucleotide). Residues 258–415 are nitrate reductase delta subunit; that stretch reads VWQCASVLLT…TVAAVCRTGD (158 aa). 5 consecutive transmembrane segments (helical) span residues 416–436, 466–486, 504–524, 545–565, and 595–615; these read MMGE…VAVG, PMFH…LVIP, AVVL…LLIY, LVLV…SGVV, and APLY…LWPF. The nitrate reductase gamma subunit stretch occupies residues 416-652; the sequence is MMGELFWTVV…VLTRPRRRGW (237 aa). Heme b contacts are provided by His-469 and His-479. Heme b-binding residues include His-602 and His-620.

This sequence in the N-terminal section; belongs to the nitrate reductase alpha subunit family. In the central section; belongs to the NarJ/NarW family. The protein in the C-terminal section; belongs to the nitrate reductase gamma subunit family. [4Fe-4S] cluster serves as cofactor. Requires Mo-bis(molybdopterin guanine dinucleotide) as cofactor. Heme b is required as a cofactor.

The protein localises to the cell membrane. Functionally, does not seem to have nitrate reductase activity. This is Nitrate reductase-like protein NarX (narX) from Mycobacterium tuberculosis (strain CDC 1551 / Oshkosh).